We begin with the raw amino-acid sequence, 243 residues long: Adenosine 5'-phosphosulfate reductase (243 aa).

Residues Cys-126, Cys-127, Cys-209, and Cys-212 each contribute to the [4Fe-4S] cluster site. The Nucleophile; cysteine thiosulfonate intermediate role is filled by Cys-235.

The protein belongs to the PAPS reductase family. CysH subfamily. Requires [4Fe-4S] cluster as cofactor.

It localises to the cytoplasm. The enzyme catalyses [thioredoxin]-disulfide + sulfite + AMP + 2 H(+) = adenosine 5'-phosphosulfate + [thioredoxin]-dithiol. It functions in the pathway sulfur metabolism; hydrogen sulfide biosynthesis; sulfite from sulfate. Catalyzes the formation of sulfite from adenosine 5'-phosphosulfate (APS) using thioredoxin as an electron donor. The chain is Adenosine 5'-phosphosulfate reductase from Staphylococcus epidermidis (strain ATCC 35984 / DSM 28319 / BCRC 17069 / CCUG 31568 / BM 3577 / RP62A).